The sequence spans 148 residues: Macrodomain Ter protein (148 aa).

This sequence belongs to the MatP family. As to quaternary structure, homodimer.

It is found in the cytoplasm. Required for spatial organization of the terminus region of the chromosome (Ter macrodomain) during the cell cycle. Prevents early segregation of duplicated Ter macrodomains during cell division. Binds specifically to matS, which is a 13 bp signature motif repeated within the Ter macrodomain. In Aliivibrio salmonicida (strain LFI1238) (Vibrio salmonicida (strain LFI1238)), this protein is Macrodomain Ter protein.